A 600-amino-acid polypeptide reads, in one-letter code: Elongation factor 4 (600 aa).

Residues 4–186 (SKIRNFSIIA…AIVEKIPSPS (183 aa)) enclose the tr-type G domain. GTP is bound by residues 16 to 21 (DHGKST) and 133 to 136 (NKID).

The protein belongs to the TRAFAC class translation factor GTPase superfamily. Classic translation factor GTPase family. LepA subfamily.

It is found in the cell membrane. It catalyses the reaction GTP + H2O = GDP + phosphate + H(+). Functionally, required for accurate and efficient protein synthesis under certain stress conditions. May act as a fidelity factor of the translation reaction, by catalyzing a one-codon backward translocation of tRNAs on improperly translocated ribosomes. Back-translocation proceeds from a post-translocation (POST) complex to a pre-translocation (PRE) complex, thus giving elongation factor G a second chance to translocate the tRNAs correctly. Binds to ribosomes in a GTP-dependent manner. This is Elongation factor 4 from Mycoplasma mycoides subsp. mycoides SC (strain CCUG 32753 / NCTC 10114 / PG1).